Here is a 633-residue protein sequence, read N- to C-terminus: Threonine--tRNA ligase (633 aa).

Residues 1–61 (MINIHFSNNL…IENCTFEVIT (61 aa)) form the TGS domain. The catalytic stretch occupies residues 242–533 (DHRKIGRELE…LIEHHSGKFP (292 aa)). Residues Cys-333, His-384, and His-510 each coordinate Zn(2+).

The protein belongs to the class-II aminoacyl-tRNA synthetase family. Homodimer. The cofactor is Zn(2+).

The protein resides in the cytoplasm. It carries out the reaction tRNA(Thr) + L-threonine + ATP = L-threonyl-tRNA(Thr) + AMP + diphosphate + H(+). Catalyzes the attachment of threonine to tRNA(Thr) in a two-step reaction: L-threonine is first activated by ATP to form Thr-AMP and then transferred to the acceptor end of tRNA(Thr). Also edits incorrectly charged L-seryl-tRNA(Thr). The polypeptide is Threonine--tRNA ligase (Ehrlichia chaffeensis (strain ATCC CRL-10679 / Arkansas)).